Consider the following 445-residue polypeptide: 3-phosphoshikimate 1-carboxyvinyltransferase (445 aa).

K28, S29, and R33 together coordinate 3-phosphoshikimate. A phosphoenolpyruvate-binding site is contributed by K28. Phosphoenolpyruvate contacts are provided by G102 and R130. Positions 179, 180, 181, 330, and 357 each coordinate 3-phosphoshikimate. Q181 lines the phosphoenolpyruvate pocket. E330 serves as the catalytic Proton acceptor. Phosphoenolpyruvate-binding residues include R361, R405, and K430.

It belongs to the EPSP synthase family. Monomer.

Its subcellular location is the cytoplasm. The enzyme catalyses 3-phosphoshikimate + phosphoenolpyruvate = 5-O-(1-carboxyvinyl)-3-phosphoshikimate + phosphate. Its pathway is metabolic intermediate biosynthesis; chorismate biosynthesis; chorismate from D-erythrose 4-phosphate and phosphoenolpyruvate: step 6/7. In terms of biological role, catalyzes the transfer of the enolpyruvyl moiety of phosphoenolpyruvate (PEP) to the 5-hydroxyl of shikimate-3-phosphate (S3P) to produce enolpyruvyl shikimate-3-phosphate and inorganic phosphate. The protein is 3-phosphoshikimate 1-carboxyvinyltransferase of Bifidobacterium longum (strain DJO10A).